The sequence spans 943 residues: MTDYKATLNLPDTAFPMKAGLPQREPQILQRWDSIGLYQKLREIGKDRPKFVLHDGPPYANGKIHIGHALNKILKDMIVRSKTLSGFDAPYVPGWDCHGLPIEHKVEVTHGKHLTADRTRELCREYAAEQIEGQKTEFIRLGVLGDWDNPYKTMNFANEAGEIRALAEMVKQGFVFKGLKPVNWCFDCGSALAEAEVEYADKKSQTIDVAFPVADADKLAAAFGLPALAKPAAIVIWTTTPWTIPANQALNIHPEFKYALVDTGERLLVLAEELVESCLKRYNLEGSVIATAQGSALELVNFRHPFYDRLSPVYLADYVELGAGTGVVHSAPAYGEDDFVTCKRYGMVNDDILTPVQSNGVYVESLEFFGGQFIWKANPAIVEKLSEVGALMHTETISHSYMHCWRHKTPLIYRATAQWFVGMDKQPSTGEPLRERALKAIEDTQFVPAWGQARLHSMIANRPDWCISRQRNWGVPIPFFLHKQTGELHPRTVELMEAVAKRVEQEGIEAWFKLDAAELLGDEAGQYDKITDTLDVWFDSGTTHWHVLRGSHDIGHATGPRADLYLEGSDQHRGWFHSSLLTGCAIDNHAPYRELLTHGFTVDESGRKMSKSLGNTIEPEKVNNTLGADILRLWVSATDYSGEMAVSEQILQRSADAYRRIRNTARFLLSNLSGFDPARDLLAPEDMLALDRWAVDRTLLLQRELEEHYSEYRFWNVYSKIHNFCVQELGGFYLDIIKDRQYTTGANSVARRSCQTALYHISEALVRWIAPILAFTADEIWQYLPGERNESVMLNGWYQGLSELPEGTELDRAYWDRVMAVKAAVNKELENQRTAKVIGGNLQAEVTLFAEEGLSADLSKLGDELRFVLITSAASVVPFAQAPADAVATEVEGLKLKVVKSGHAKCGRCWHFRADVGSHPEHPEICSRCVDNLSGSGEVRHYA.

Positions 58–68 match the 'HIGH' region motif; that stretch reads PYANGKIHIGH. Glu567 is a binding site for L-isoleucyl-5'-AMP. Positions 608 to 612 match the 'KMSKS' region motif; it reads KMSKS. Lys611 contacts ATP. Residues Cys906, Cys909, Cys926, and Cys929 each coordinate Zn(2+).

The protein belongs to the class-I aminoacyl-tRNA synthetase family. IleS type 1 subfamily. As to quaternary structure, monomer. Requires Zn(2+) as cofactor.

It localises to the cytoplasm. The enzyme catalyses tRNA(Ile) + L-isoleucine + ATP = L-isoleucyl-tRNA(Ile) + AMP + diphosphate. Functionally, catalyzes the attachment of isoleucine to tRNA(Ile). As IleRS can inadvertently accommodate and process structurally similar amino acids such as valine, to avoid such errors it has two additional distinct tRNA(Ile)-dependent editing activities. One activity is designated as 'pretransfer' editing and involves the hydrolysis of activated Val-AMP. The other activity is designated 'posttransfer' editing and involves deacylation of mischarged Val-tRNA(Ile). This Pseudomonas putida (strain W619) protein is Isoleucine--tRNA ligase.